The chain runs to 434 residues: Prenyltransferase penG (434 aa).

2 stretches are compositionally biased toward polar residues: residues 1 to 14 (MTQD…QTAG) and 21 to 35 (THSN…PSTW). The interval 1-35 (MTQDVVTVSSQTAGTIKESGTHSNPDNKTTSPSTW) is disordered. L-tryptophan contacts are provided by residues 104 to 105 (EI) and Glu108. The substrate site is built by Arg122, Lys208, Arg275, Lys277, Tyr279, and Tyr348.

Belongs to the tryptophan dimethylallyltransferase family.

It carries out the reaction yaequinolone E + dimethylallyl diphosphate + H2O = [(1'E)-3'-hydroxy-3',7'-dimethylocta-1',6'-dien-1'-yl]-quinolinone B + diphosphate. It functions in the pathway secondary metabolite biosynthesis. Its pathway is alkaloid biosynthesis. It participates in mycotoxin biosynthesis. In terms of biological role, prenyltransferase; part of the gene cluster that mediates the biosynthesis of penigequinolones, potent insecticidal alkaloids that contain a highly modified 10-carbon prenyl group. The first stage is catalyzed by the nonribosomal peptide synthetase penN that condenses anthranilic acid and O-methyl-L-tyrosine to produce 4'-methoxycyclopeptin. 4'-methoxycyclopeptin is then converted to 4'-methoxydehydrocyclopeptin by the ketoglutarate-dependent dioxygenase penM through dehydrogenation to form a double bond between C-alpha and C-beta of the O-methyltyrosine side chain. PenM also converts its first product methoxydehydrocyclopeptin to 4'-methoxycyclopenin. The following conversion of 4'methoxycyclopenin into 4'-methoxyviridicatin is catalyzed by the cyclopenase penL. 4'-methoxyviridicatin is the precursor of quinolone natural products, and is further converted to quinolinone B. The prenyltransferase penI then catalyzes the canonical Friedel-Crafts alkylation of quinolinone B with dimethylallyl cation to yield dimethylallyl quinolone, which is subjected to FAD-dependent dehydrogenation by the FAD-linked oxidoreductase penH to yield conjugated aryl diene. The delta(3') double bond then serves as the site of the second alkylation with DMAPP catalyzed by the prenyltransferase penG to yield a carbenium ion intermediate, which can be attacked by H(2)O to yield a styrenyl quinolone containing a C3'-hydroxyprenyl chain, or undergo cyclization to yield yaequinolones J1 and J2. The conversion of the styrenyl quinolone into the tetrahydrofuran-containing yaequinolone C is performed by the FAD-dependent monooxygenase penE and involves epoxidation of the terminal C7'-C8' olefin, followed by epoxide ring opening initiated by the C3' hydroxyl group. The predicted cysteine hydrolase penJ acts as an epoxide hydrolase that enhances the rate of the 5-exo-tet cyclization step, increasing the yield of yaequinolone C. PenF catalyzes the cationic rearrangement of the epoxide formed by penE (before ring opening to produce yaequinolone C) into yaequinolone D. Finally, the short-chain dehydrogenase/reductase (SDR)-like reductase penD, catalyzes both the dehydration of yaequinolone D and the reduction of the resulting oxonium to yield penigequinolone. The sequence is that of Prenyltransferase penG from Penicillium thymicola.